Consider the following 148-residue polypeptide: Male-specific protein scotti (148 aa).

Positions 56 to 78 (PQEPPLGVFPAQGGPNGPPRLRK) are disordered. Asparagine 129 carries N-linked (GlcNAc...) asparagine glycosylation.

This sequence belongs to the male-specific scotti family.

Its function is as follows. Post-meiotically transcribed gene that has a role in late spermiogenesis; required for actin cone progression during spermatid individualization. This is Male-specific protein scotti from Drosophila sechellia (Fruit fly).